The chain runs to 239 residues: 1-(5-phosphoribosyl)-5-[(5-phosphoribosylamino)methylideneamino] imidazole-4-carboxamide isomerase (239 aa).

Asp8 serves as the catalytic Proton acceptor. The active-site Proton donor is Asp130.

Belongs to the HisA/HisF family.

It is found in the cytoplasm. The catalysed reaction is 1-(5-phospho-beta-D-ribosyl)-5-[(5-phospho-beta-D-ribosylamino)methylideneamino]imidazole-4-carboxamide = 5-[(5-phospho-1-deoxy-D-ribulos-1-ylimino)methylamino]-1-(5-phospho-beta-D-ribosyl)imidazole-4-carboxamide. It participates in amino-acid biosynthesis; L-histidine biosynthesis; L-histidine from 5-phospho-alpha-D-ribose 1-diphosphate: step 4/9. This Streptococcus thermophilus (strain ATCC BAA-491 / LMD-9) protein is 1-(5-phosphoribosyl)-5-[(5-phosphoribosylamino)methylideneamino] imidazole-4-carboxamide isomerase.